The primary structure comprises 60 residues: Large ribosomal subunit protein uL30 (60 aa).

Belongs to the universal ribosomal protein uL30 family. As to quaternary structure, part of the 50S ribosomal subunit.

The polypeptide is Large ribosomal subunit protein uL30 (Cupriavidus metallidurans (strain ATCC 43123 / DSM 2839 / NBRC 102507 / CH34) (Ralstonia metallidurans)).